We begin with the raw amino-acid sequence, 60 residues long: Large ribosomal subunit protein bL32 (60 aa).

Over residues 1-16 (MAVPKRKTTPSKRGMR) the composition is skewed to basic residues. Residues 1-60 (MAVPKRKTTPSKRGMRRSADALKQPAYVENPDSGELHRPHHVDLKSGMYRGKQILKPKGE) form a disordered region. Residues 34–44 (GELHRPHHVDL) are compositionally biased toward basic and acidic residues.

The protein belongs to the bacterial ribosomal protein bL32 family.

This is Large ribosomal subunit protein bL32 from Parvibaculum lavamentivorans (strain DS-1 / DSM 13023 / NCIMB 13966).